A 95-amino-acid polypeptide reads, in one-letter code: Stationary phase-expressed protein 1 (95 aa).

A helical transmembrane segment spans residues 20–38 (FRYIMLGLVGAAVVPTAYM).

The protein resides in the mitochondrion membrane. This chain is Stationary phase-expressed protein 1 (SPG1), found in Saccharomyces cerevisiae (strain RM11-1a) (Baker's yeast).